A 298-amino-acid polypeptide reads, in one-letter code: Lipoyl synthase (298 aa).

[4Fe-4S] cluster contacts are provided by C40, C45, C51, C67, C71, C74, and S280. A Radical SAM core domain is found at 53–269 (AVRRTATFMI…KEIAMAKGFS (217 aa)).

The protein belongs to the radical SAM superfamily. Lipoyl synthase family. The cofactor is [4Fe-4S] cluster.

It localises to the cytoplasm. It carries out the reaction [[Fe-S] cluster scaffold protein carrying a second [4Fe-4S](2+) cluster] + N(6)-octanoyl-L-lysyl-[protein] + 2 oxidized [2Fe-2S]-[ferredoxin] + 2 S-adenosyl-L-methionine + 4 H(+) = [[Fe-S] cluster scaffold protein] + N(6)-[(R)-dihydrolipoyl]-L-lysyl-[protein] + 4 Fe(3+) + 2 hydrogen sulfide + 2 5'-deoxyadenosine + 2 L-methionine + 2 reduced [2Fe-2S]-[ferredoxin]. The protein operates within protein modification; protein lipoylation via endogenous pathway; protein N(6)-(lipoyl)lysine from octanoyl-[acyl-carrier-protein]. In terms of biological role, catalyzes the radical-mediated insertion of two sulfur atoms into the C-6 and C-8 positions of the octanoyl moiety bound to the lipoyl domains of lipoate-dependent enzymes, thereby converting the octanoylated domains into lipoylated derivatives. This chain is Lipoyl synthase, found in Bacillus pumilus (strain SAFR-032).